Reading from the N-terminus, the 109-residue chain is FAD assembly factor SdhE (109 aa).

The interval 1 to 22 (MQDNFTASSPSSSSSASGVAED) is disordered. The segment covering 7–17 (ASSPSSSSSAS) has biased composition (low complexity).

This sequence belongs to the SdhE FAD assembly factor family.

Its subcellular location is the cytoplasm. Its function is as follows. An FAD assembly protein, which accelerates covalent attachment of the cofactor into other proteins. Plays an essential role in the assembly of succinate dehydrogenase (SDH, respiratory complex II), an enzyme complex that is a component of both the tricarboxylic acid cycle and the electron transport chain, and which couples the oxidation of succinate to fumarate with the reduction of ubiquinone (coenzyme Q) to ubiquinol. Required for flavinylation of SdhA, when the SDH operon and this gene are overexpressed in G.oxydans. Flavinylation of SdhA is detected only in the presence of sdhE. The chain is FAD assembly factor SdhE from Acetobacter pasteurianus (strain NBRC 105184 / IFO 3283-01).